The sequence spans 76 residues: Omega-conotoxin-like TeA61 (76 aa).

Positions methionine 1–alanine 22 are cleaved as a signal peptide. The propeptide occupies aspartate 23 to arginine 51. Disulfide bonds link cysteine 52–cysteine 67, cysteine 59–cysteine 70, and cysteine 66–cysteine 75.

This sequence belongs to the conotoxin O1 superfamily. As to expression, expressed by the venom duct.

It is found in the secreted. Functionally, omega-conotoxins act at presynaptic membranes, they bind and block voltage-gated calcium channels (Cav). The chain is Omega-conotoxin-like TeA61 from Conus textile (Cloth-of-gold cone).